Reading from the N-terminus, the 313-residue chain is DNA-directed RNA polymerase subunit alpha (313 aa).

Residues 1–226 are alpha N-terminal domain (alpha-NTD); the sequence is MLEIEKPKIE…EHLQLFVNLN (226 aa). Residues 243–313 form an alpha C-terminal domain (alpha-CTD) region; it reads KEKLAEMPIE…MGLSLRKEEE (71 aa).

This sequence belongs to the RNA polymerase alpha chain family. As to quaternary structure, homodimer. The RNAP catalytic core consists of 2 alpha, 1 beta, 1 beta' and 1 omega subunit. When a sigma factor is associated with the core the holoenzyme is formed, which can initiate transcription.

It catalyses the reaction RNA(n) + a ribonucleoside 5'-triphosphate = RNA(n+1) + diphosphate. Functionally, DNA-dependent RNA polymerase catalyzes the transcription of DNA into RNA using the four ribonucleoside triphosphates as substrates. This is DNA-directed RNA polymerase subunit alpha from Carboxydothermus hydrogenoformans (strain ATCC BAA-161 / DSM 6008 / Z-2901).